A 452-amino-acid polypeptide reads, in one-letter code: tRNA modification GTPase MnmE (452 aa).

The (6S)-5-formyl-5,6,7,8-tetrahydrofolate site is built by Arg24, Glu81, and Lys120. Positions Gly217 to Ile373 constitute a TrmE-type G domain. Residue Asn227 participates in K(+) binding. Residues Asn227–Ser232, Thr246–Thr252, and Asp271–Gly274 contribute to the GTP site. Ser231 serves as a coordination point for Mg(2+). K(+) contacts are provided by Thr246, Ile248, and Thr251. Thr252 is a binding site for Mg(2+). Lys452 is a binding site for (6S)-5-formyl-5,6,7,8-tetrahydrofolate.

Belongs to the TRAFAC class TrmE-Era-EngA-EngB-Septin-like GTPase superfamily. TrmE GTPase family. Homodimer. Heterotetramer of two MnmE and two MnmG subunits. K(+) serves as cofactor.

Its subcellular location is the cytoplasm. In terms of biological role, exhibits a very high intrinsic GTPase hydrolysis rate. Involved in the addition of a carboxymethylaminomethyl (cmnm) group at the wobble position (U34) of certain tRNAs, forming tRNA-cmnm(5)s(2)U34. The chain is tRNA modification GTPase MnmE from Mesoplasma florum (strain ATCC 33453 / NBRC 100688 / NCTC 11704 / L1) (Acholeplasma florum).